The sequence spans 164 residues: MIDYSGLRTIFGEKLPESHIFFATVAAHKYVPSYAFLRRELGLSSAHTNRKVWKKFVEAYGKAIPPAPPAPPLTLSKDLTASMSVEEGAALTLSVTATGGTGPYTYAWTKDGSPIPDASGATYTKPTAAAEDAGSYKVTVTDSKQVSKDSTTCAVTVNPTVPGG.

Residues 1-72 (MIDYSGLRTI…AIPPAPPAPP (72 aa)) are binding to the capsid hexamer. The 94-residue stretch at 71-164 (PPLTLSKDLT…VTVNPTVPGG (94 aa)) folds into the Ig-like domain.

As to quaternary structure, interacts with the major capsid protein; each hexon binds a single copy of the decoration protein.

It localises to the virion. Its function is as follows. Decoration protein that binds asymmetrically to the center of each capsid protein hexamer after capsid expansion. Stabilizes the capsid and protects from DNA release. The polypeptide is Decoration protein (Escherichia phage T5 (Enterobacteria phage T5)).